Here is a 463-residue protein sequence, read N- to C-terminus: 23S rRNA (uracil(1939)-C(5))-methyltransferase RlmD (463 aa).

Residues 6 to 76 (KSRKPQQPEY…KRLEEAEMVA (71 aa)) form the TRAM domain. The [4Fe-4S] cluster site is built by C90, C96, C99, and C178. Residues Q288, F317, N322, E341, D368, and D389 each coordinate S-adenosyl-L-methionine. C415 serves as the catalytic Nucleophile.

It belongs to the class I-like SAM-binding methyltransferase superfamily. RNA M5U methyltransferase family. RlmD subfamily.

It catalyses the reaction uridine(1939) in 23S rRNA + S-adenosyl-L-methionine = 5-methyluridine(1939) in 23S rRNA + S-adenosyl-L-homocysteine + H(+). Catalyzes the formation of 5-methyl-uridine at position 1939 (m5U1939) in 23S rRNA. The polypeptide is 23S rRNA (uracil(1939)-C(5))-methyltransferase RlmD (Acinetobacter baumannii (strain SDF)).